A 344-amino-acid polypeptide reads, in one-letter code: DNA-directed RNA polymerase subunit alpha (344 aa).

The alpha N-terminal domain (alpha-NTD) stretch occupies residues 1 to 238 (MKVIKTAPLI…KQLGVFGERP (238 aa)). Positions 253-344 (DAKDLSAKIE…EKLEDKGGND (92 aa)) are alpha C-terminal domain (alpha-CTD).

The protein belongs to the RNA polymerase alpha chain family. In terms of assembly, homodimer. The RNAP catalytic core consists of 2 alpha, 1 beta, 1 beta' and 1 omega subunit. When a sigma factor is associated with the core the holoenzyme is formed, which can initiate transcription.

It carries out the reaction RNA(n) + a ribonucleoside 5'-triphosphate = RNA(n+1) + diphosphate. Its function is as follows. DNA-dependent RNA polymerase catalyzes the transcription of DNA into RNA using the four ribonucleoside triphosphates as substrates. In Helicobacter pylori (strain HPAG1), this protein is DNA-directed RNA polymerase subunit alpha.